The chain runs to 370 residues: MSTKELYIGVMSGTSMDGVDCALVEFDQEQVRLIAHSDYPMPADLRQQLLSVCTGQATNLKQIGELDHRLGHLFADAVMDLLSQAGVDASQICAIGNHGQTVFHQPNGEFPFTTQLGDANIIATRTNIDTVADFRRKDMALGGQGAPLVPAFHQSVFALQDSTTVVLNIGGIANISVLHPTRPVLGYDTGPGNMLMDAWCETHTQQNYDKDARFALQGEVNEALLNSLLQEPYLHQDAPKSTGRELFNMEWLTAKLQGQNYRSEDVQRTLCEYTALTISKEVERFRYGPTPQLLVCGGGARNPLLMQRLQQQLSHWQVSTTDAKGVSGDYMEAMAFAWLAYRHMHRLPSNLPEVTGASRLASLGVLYPKA.

13 to 20 (GTSMDGVD) is a binding site for ATP.

This sequence belongs to the anhydro-N-acetylmuramic acid kinase family.

It catalyses the reaction 1,6-anhydro-N-acetyl-beta-muramate + ATP + H2O = N-acetyl-D-muramate 6-phosphate + ADP + H(+). Its pathway is amino-sugar metabolism; 1,6-anhydro-N-acetylmuramate degradation. The protein operates within cell wall biogenesis; peptidoglycan recycling. Catalyzes the specific phosphorylation of 1,6-anhydro-N-acetylmuramic acid (anhMurNAc) with the simultaneous cleavage of the 1,6-anhydro ring, generating MurNAc-6-P. Is required for the utilization of anhMurNAc either imported from the medium or derived from its own cell wall murein, and thus plays a role in cell wall recycling. This Vibrio vulnificus (strain YJ016) protein is Anhydro-N-acetylmuramic acid kinase.